A 453-amino-acid chain; its full sequence is Carbamoyl phosphate synthase arginine-specific small chain (453 aa).

A mitochondrion-targeting transit peptide spans 1-13; it reads MFSKLAANFAQRA. The region spanning 233-420 is the Glutamine amidotransferase type-1 domain; that stretch reads HVALIDCGVK…LENVRAAKSA (188 aa). The active-site Nucleophile is Cys309. Catalysis depends on residues His393 and Glu395.

It belongs to the CarA family. Heterodimer composed of 2 chains; the small (or glutamine) chain promotes the hydrolysis of glutamine to ammonia, which is used by the large (or ammonia) chain to synthesize carbamoyl phosphate.

The protein localises to the mitochondrion matrix. It catalyses the reaction hydrogencarbonate + L-glutamine + 2 ATP + H2O = carbamoyl phosphate + L-glutamate + 2 ADP + phosphate + 2 H(+). The catalysed reaction is L-glutamine + H2O = L-glutamate + NH4(+). It functions in the pathway amino-acid biosynthesis; L-arginine biosynthesis; carbamoyl phosphate from bicarbonate: step 1/1. Small subunit of the arginine-specific carbamoyl phosphate synthase (CPSase). CPSase catalyzes the formation of carbamoyl phosphate from the ammonia moiety of glutamine, carbonate, and phosphate donated by ATP, the first step of the arginine biosynthetic pathway. The small subunit (glutamine amidotransferase) binds and cleaves glutamine to supply the large subunit with the substrate ammonia. This Hypocrea virens (Gliocladium virens) protein is Carbamoyl phosphate synthase arginine-specific small chain (cpa1).